We begin with the raw amino-acid sequence, 364 residues long: Nucleosome assembly protein 1;2 (364 aa).

Residues V32 to E86 are a coiled coil. A Nuclear export signal motif is present at residues L53 to Q68. The Nuclear localization signal motif lies at K227–K232. Disordered stretches follow at residues F250–T269 and G301–Q364. Composition is skewed to acidic residues over residues P259–T269 and A304–D340. Residue C361 is modified to Cysteine methyl ester. C361 carries the S-farnesyl cysteine lipid modification. A propeptide spans K362–Q364 (removed in mature form).

Belongs to the nucleosome assembly protein (NAP) family.

The protein resides in the nucleus. It is found in the cytoplasm. Functionally, may modulate chromatin structure by regulation of nucleosome assembly/disassembly. The protein is Nucleosome assembly protein 1;2 (NAP1;2) of Oryza sativa subsp. japonica (Rice).